The primary structure comprises 523 residues: ATP synthase subunit alpha (523 aa).

An ATP-binding site is contributed by 173 to 180 (GDRQTGKT).

It belongs to the ATPase alpha/beta chains family. As to quaternary structure, F-type ATPases have 2 components, CF(1) - the catalytic core - and CF(0) - the membrane proton channel. CF(1) has five subunits: alpha(3), beta(3), gamma(1), delta(1), epsilon(1). CF(0) has three main subunits: a(1), b(2) and c(9-12). The alpha and beta chains form an alternating ring which encloses part of the gamma chain. CF(1) is attached to CF(0) by a central stalk formed by the gamma and epsilon chains, while a peripheral stalk is formed by the delta and b chains.

The protein resides in the cell membrane. It carries out the reaction ATP + H2O + 4 H(+)(in) = ADP + phosphate + 5 H(+)(out). Its function is as follows. Produces ATP from ADP in the presence of a proton gradient across the membrane. The alpha chain is a regulatory subunit. This chain is ATP synthase subunit alpha, found in Streptomyces griseus subsp. griseus (strain JCM 4626 / CBS 651.72 / NBRC 13350 / KCC S-0626 / ISP 5235).